Here is a 381-residue protein sequence, read N- to C-terminus: MKNLLDLSIEELKELVSPSFRATQIYEWVYKKNATEFSQMLNLPKDMRQDLAEKFYLDPLKCVKFEQSSDGSIKYLFELKDGLKIESVLLPMKEEISDEDGKISRHARYTICVSSQVGCKMGCAFCLTAKGGLVRNLTAGEIVGQILWIKRENKIPYERRINVVYMGMGEPLDNLTNVSKAIKILALNEGLAISPRRQTVSTSGLGSQIKKLGEMDLGVLLAISLHAVTNELRSRLMPINKAYNIEAVMDAVRGFPIDMRKRVMFEYLVIKDLNDSVSDAKKLVKLLHGIKAKVNLIYFNPHEGSEFGRPELASMLKFQEYLRDHGVTCTIRQSKGLDISAACGQLKQRNENPKFRANVSGNSAAKTEEKPTNDKTNVSKK.

Glutamate 86 acts as the Proton acceptor in catalysis. In terms of domain architecture, Radical SAM core spans 105-338 (RHARYTICVS…CTIRQSKGLD (234 aa)). The cysteines at positions 112 and 343 are disulfide-linked. The [4Fe-4S] cluster site is built by cysteine 119, cysteine 123, and cysteine 126. Residues 169–170 (GE), serine 201, 224–226 (SLH), and asparagine 300 contribute to the S-adenosyl-L-methionine site. Residue cysteine 343 is the S-methylcysteine intermediate of the active site. The interval 351 to 381 (ENPKFRANVSGNSAAKTEEKPTNDKTNVSKK) is disordered.

It belongs to the radical SAM superfamily. RlmN family. It depends on [4Fe-4S] cluster as a cofactor.

It is found in the cytoplasm. It carries out the reaction adenosine(2503) in 23S rRNA + 2 reduced [2Fe-2S]-[ferredoxin] + 2 S-adenosyl-L-methionine = 2-methyladenosine(2503) in 23S rRNA + 5'-deoxyadenosine + L-methionine + 2 oxidized [2Fe-2S]-[ferredoxin] + S-adenosyl-L-homocysteine. The catalysed reaction is adenosine(37) in tRNA + 2 reduced [2Fe-2S]-[ferredoxin] + 2 S-adenosyl-L-methionine = 2-methyladenosine(37) in tRNA + 5'-deoxyadenosine + L-methionine + 2 oxidized [2Fe-2S]-[ferredoxin] + S-adenosyl-L-homocysteine. In terms of biological role, specifically methylates position 2 of adenine 2503 in 23S rRNA and position 2 of adenine 37 in tRNAs. m2A2503 modification seems to play a crucial role in the proofreading step occurring at the peptidyl transferase center and thus would serve to optimize ribosomal fidelity. The chain is Dual-specificity RNA methyltransferase RlmN from Campylobacter concisus (strain 13826).